The chain runs to 386 residues: Outer membrane protein assembly factor BamB (386 aa).

The signal sequence occupies residues 1–25 (MMRNSRPGRAWRGAVVLTGLLALSG). The N-palmitoyl cysteine moiety is linked to residue Cys26. Cys26 carries the S-diacylglycerol cysteine lipid modification.

This sequence belongs to the BamB family. As to quaternary structure, part of the Bam complex.

It localises to the cell outer membrane. Functionally, part of the outer membrane protein assembly complex, which is involved in assembly and insertion of beta-barrel proteins into the outer membrane. The chain is Outer membrane protein assembly factor BamB from Bordetella pertussis (strain Tohama I / ATCC BAA-589 / NCTC 13251).